The primary structure comprises 179 residues: MTYLSQLEALLFVAGEEGLSLRQLASLLELTPTALQQQLDKLSQKYKEDKESGLCLIESSRTYKLVTKECLAPLLKDYAKAPINQTLSRASLEVLSIVAYKQPITRIEIDEIRGVNSSGALSKLVAFGLVQEAGKKEVIGRPNLYATTDYFLDYMGINHLEELVDISSIAVEEQETTLF.

The protein belongs to the ScpB family. As to quaternary structure, homodimer. Homodimerization may be required to stabilize the binding of ScpA to the Smc head domains. Component of a cohesin-like complex composed of ScpA, ScpB and the Smc homodimer, in which ScpA and ScpB bind to the head domain of Smc. The presence of the three proteins is required for the association of the complex with DNA.

It localises to the cytoplasm. In terms of biological role, participates in chromosomal partition during cell division. May act via the formation of a condensin-like complex containing Smc and ScpA that pull DNA away from mid-cell into both cell halves. The polypeptide is Segregation and condensation protein B (Streptococcus equi subsp. equi (strain 4047)).